The chain runs to 88 residues: Small ribosomal subunit protein uS15c (88 aa).

The protein belongs to the universal ribosomal protein uS15 family. As to quaternary structure, part of the 30S ribosomal subunit.

Its subcellular location is the plastid. The protein resides in the chloroplast. The protein is Small ribosomal subunit protein uS15c (rps15) of Nasturtium officinale (Watercress).